A 196-amino-acid polypeptide reads, in one-letter code: MIARTLRTVGRQGRNLLLPRITACRPLHAIPANFSKAYDHDGKTKVTIFNTETDLGLMVTGYSQYGFRLNNDMVLIGPISVFPRSVLSWNVNSFEDINEDSLSLFPTLEPKIDVLIIGIGDQAPPPALSKRIIEFMKKYKINVEILRTEQACATFNFLNAENRMVACALIPPLHLSYNENDILQAKLRKKELYETE.

A mitochondrion-targeting transit peptide spans 1-93; that stretch reads MIARTLRTVG…RSVLSWNVNS (93 aa).

This sequence belongs to the NDUFAF3 family. Together with NdufAF4 associates with mitochondrial complex I assembly intermediates during its biogenesis.

Its subcellular location is the mitochondrion. Functionally, involved in the assembly of mitochondrial NADH:ubiquinone oxidoreductase complex (complex I). Together with NdufAF4, involved in biogenesis of complex 1 modules N, Q and P-peripheral, but not the P-distal module. Required for recruitment of the complex I assembly factor Timmdc1 to complex 1 assembly intermediates. The chain is NADH dehydrogenase [ubiquinone] 1 alpha subcomplex assembly factor 3 from Drosophila melanogaster (Fruit fly).